The chain runs to 418 residues: Homeobox protein H2.0 (418 aa).

The span at 190–216 (QHQKQQHQQHHHHQHHPKHLHQQHKPP) shows a compositional bias: basic residues. 3 disordered regions span residues 190–223 (QHQK…STTA), 259–296 (TSPA…RKRS), and 354–418 (RENL…NVVE). Residues 259–273 (TSPAAAAAATSQNGA) are compositionally biased toward low complexity. Residues 295–354 (RSWSRAVFSNLQRKGLEIQFQQQKYITKPDRRKLAARLNLTDAQVKVWFQNRRMKWRHTR) constitute a DNA-binding region (homeobox). The segment covering 391-403 (DYSSDSCSSVDLS) has biased composition (low complexity).

Belongs to the H2.0 homeobox family. Expressed in cells of the visceral musculature and its anlagen.

It is found in the nucleus. May play a role in pattern formation during embryonic and imaginal development. Is not essential for visceral muscle morphogenesis. The polypeptide is Homeobox protein H2.0 (H2.0) (Drosophila melanogaster (Fruit fly)).